We begin with the raw amino-acid sequence, 476 residues long: uncharacterized protein (476 aa).

Residues 147–204 (DVRLAELRRRRAELEAEIAAVEAGDIAVLDPTAVRDRYQQLSTTARELLSDFREVEEN) are a coiled coil.

This is an uncharacterized protein from Mycolicibacterium smegmatis (strain ATCC 700084 / mc(2)155) (Mycobacterium smegmatis).